The primary structure comprises 141 residues: Putative antiporter subunit mnhB2 (141 aa).

The next 4 helical transmembrane spans lie at 10–30 (TVTK…FFAG), 35–55 (GGGF…FLAF), 70–90 (ILMI…MFFG), and 114–134 (ITLF…TVML).

It belongs to the CPA3 antiporters (TC 2.A.63) subunit B family. In terms of assembly, may form a heterooligomeric complex that consists of seven subunits: mnhA2, mnhB2, mnhC2, mnhD2, mnhE2, mnhF2 and mnhG2.

It localises to the cell membrane. This chain is Putative antiporter subunit mnhB2 (mnhB2), found in Staphylococcus aureus (strain Mu3 / ATCC 700698).